The primary structure comprises 727 residues: Pre-B-cell leukemia transcription factor-interacting protein 1 (727 aa).

Over residues 1–10 the composition is skewed to polar residues; it reads MASCPDSDNS. Positions 1-135 are disordered; the sequence is MASCPDSDNS…SPHRSLPSSP (135 aa). Positions 39 to 53 are enriched in low complexity; that stretch reads RAPQSPSRAAAEESA. The residue at position 43 (Ser43) is a Phosphoserine. The span at 61–70 shows a compositional bias: polar residues; it reads TVSQNESSKS. Ser130, Ser134, Ser147, Ser148, and Ser149 each carry phosphoserine. Residue Thr153 is modified to Phosphothreonine. Coiled-coil stretches lie at residues 269–353 and 380–421; these read QNMA…QGAD and SPGF…SLKE. Residues 488 to 506 carry the Nuclear localization signal motif; sequence WKTEHWKHKKEASGREKSW. Disordered regions lie at residues 491-568 and 701-727; these read EHWK…AKDR and KRSG…HRQG. Basic and acidic residues-rich tracts occupy residues 498-544, 551-568, and 716-727; these read EASG…EPPR, PSGE…AKDR, and GPREEHSPHRQG. The short motif at 696–719 is the Nuclear localization signal element; sequence DKALKKRSGKKDKHLQNRVVGPRE.

Interacts with ESR1, PBX1, PBX2 and PBX3. Interacts with TEX11.

The protein localises to the cytoplasm. It is found in the cytoskeleton. The protein resides in the nucleus. Its function is as follows. Regulator of pre-B-cell leukemia transcription factors (BPXs) function. Inhibits the binding of PBX1-HOX complex to DNA and blocks the transcriptional activity of E2A-PBX1. Tethers estrogen receptor-alpha (ESR1) to microtubules and allows them to influence estrogen receptors-alpha signaling. In Bos taurus (Bovine), this protein is Pre-B-cell leukemia transcription factor-interacting protein 1 (PBXIP1).